A 194-amino-acid chain; its full sequence is GTP cyclohydrolase 1 (194 aa).

The Zn(2+) site is built by Cys-83, His-86, and Cys-155.

The protein belongs to the GTP cyclohydrolase I family. In terms of assembly, homomer.

The catalysed reaction is GTP + H2O = 7,8-dihydroneopterin 3'-triphosphate + formate + H(+). It functions in the pathway cofactor biosynthesis; 7,8-dihydroneopterin triphosphate biosynthesis; 7,8-dihydroneopterin triphosphate from GTP: step 1/1. This chain is GTP cyclohydrolase 1, found in Streptococcus pyogenes serotype M49 (strain NZ131).